Reading from the N-terminus, the 360-residue chain is MWLQLLLLLLAPQGGHGCHGLELDRELVLAKVRALFLDALGPPPVTGEGGDPGVRRLHRRHAVGGFMRRGSEPEDQDVSQAILFPAAGASCGDEPDAGEAEEGLFTYVFQPSQHTRSRQVTSAQLWFHTGLDRQETAAANSSEPLLGLLVLTSGGPMPVPMSLGQAPPRWAVLHLATSAFPLLTHPVLALLLRCPLCSCSTRPEATPFLVAHTRAKPPSGGERARRSTPPLPWPWSPAALRLLQRPPEEPAAHADCHRAALNISFQELGWDRWIVHPPSFIFYYCHGGCGLSPPQDLPLPVPGVPPTPVQPLSLVPGAQPCCAALPGTMRPLHVRTTSDGGYSFKYEMVPNLLTQHCACI.

The N-terminal stretch at 1–17 is a signal peptide; that stretch reads MWLQLLLLLLAPQGGHG. A propeptide spanning residues 18-60 is cleaved from the precursor; the sequence is CHGLELDRELVLAKVRALFLDALGPPPVTGEGGDPGVRRLHRR. Positions 61-226 are cleaved as a propeptide — inhibin alpha N-terminal region; the sequence is HAVGGFMRRG…PPSGGERARR (166 aa). 2 N-linked (GlcNAc...) asparagine glycosylation sites follow: N140 and N262. Cystine bridges form between C256–C322, C285–C357, and C289–C359.

Belongs to the TGF-beta family. As to quaternary structure, dimeric, linked by one or more disulfide bonds. Activin B is a dimer of alpha and beta-B. Inhibin A is a dimer of alpha and beta-A. Inhibin B is a dimer of alpha and beta-B. Interacts with TGFBR3L; this interaction regulates female fertility. In terms of processing, proteolytic processing yields a number of bioactive forms, consisting either solely of the mature alpha chain, of the most N-terminal propeptide linked through a disulfide bond to the mature alpha chain, or of the entire proprotein.

The protein resides in the secreted. Functionally, inhibins and activins inhibit and activate, respectively, the secretion of follitropin by the pituitary gland. Inhibins/activins are involved in regulating a number of diverse functions such as hypothalamic and pituitary hormone secretion, gonadal hormone secretion, germ cell development and maturation, erythroid differentiation, insulin secretion, nerve cell survival, embryonic axial development or bone growth, depending on their subunit composition. Inhibins appear to oppose the functions of activins. Its function is as follows. Inhibin A is a dimer of alpha/INHA and beta-A/INHBA that functions as a feedback regulator in the hypothalamic-pituitary-gonadal (HPG) axis. Inhibits the secretion of FSH from the anterior pituitary gland by acting on pituitary gonadotrope cells. Antagonizes activin A by binding to the proteoglycan, betaglycan, and forming a stable complex with and, thereby, sequestering type II activin receptors while excluding type I receptor. In terms of biological role, inhibin B is a dimer of alpha and beta-B that plays a crucial role in the regulation of the reproductive system by inhibiting the secretion of follicle-stimulating hormone (FSH) from the anterior pituitary gland. Thereby, maintains reproductive homeostasis in both males and females. Acts as a more potent suppressor of FSH release than inhibin A. Functions as competitive receptor antagonist binding activin type II receptors with high affinity in the presence of the TGF-beta type III coreceptor/TGFBR3L. The sequence is that of Inhibin alpha chain (INHA) from Bos taurus (Bovine).